Here is a 127-residue protein sequence, read N- to C-terminus: Holo-[acyl-carrier-protein] synthase (127 aa).

The Mg(2+) site is built by D9 and E58.

Belongs to the P-Pant transferase superfamily. AcpS family. Mg(2+) serves as cofactor.

Its subcellular location is the cytoplasm. The enzyme catalyses apo-[ACP] + CoA = holo-[ACP] + adenosine 3',5'-bisphosphate + H(+). In terms of biological role, transfers the 4'-phosphopantetheine moiety from coenzyme A to a Ser of acyl-carrier-protein. The sequence is that of Holo-[acyl-carrier-protein] synthase from Shewanella baltica (strain OS155 / ATCC BAA-1091).